A 120-amino-acid chain; its full sequence is NAD(P)H-quinone oxidoreductase subunit 3, chloroplastic (120 aa).

A run of 3 helical transmembrane segments spans residues 10–30, 64–84, and 89–109; these read FWLFLLIASLIPVSAFSISKI, MFALVFVIFDVETVFLYPWAM, and LGISAFIEALIFVLILIIGLI.

This sequence belongs to the complex I subunit 3 family. NDH is composed of at least 16 different subunits, 5 of which are encoded in the nucleus.

The protein localises to the plastid. It localises to the chloroplast thylakoid membrane. The catalysed reaction is a plastoquinone + NADH + (n+1) H(+)(in) = a plastoquinol + NAD(+) + n H(+)(out). It catalyses the reaction a plastoquinone + NADPH + (n+1) H(+)(in) = a plastoquinol + NADP(+) + n H(+)(out). Functionally, NDH shuttles electrons from NAD(P)H:plastoquinone, via FMN and iron-sulfur (Fe-S) centers, to quinones in the photosynthetic chain and possibly in a chloroplast respiratory chain. The immediate electron acceptor for the enzyme in this species is believed to be plastoquinone. Couples the redox reaction to proton translocation, and thus conserves the redox energy in a proton gradient. The protein is NAD(P)H-quinone oxidoreductase subunit 3, chloroplastic of Angiopteris evecta (Mule's foot fern).